A 427-amino-acid polypeptide reads, in one-letter code: UBX domain-containing protein 10 (427 aa).

Residues 247–311 adopt a coiled-coil conformation; that stretch reads LERFRSEREA…VQKKKKQYRA (65 aa). The UBX domain occupies 323–425; it reads SEDEPARLSI…FPNGTVVVEL (103 aa).

The protein resides in the endoplasmic reticulum. Involved in protein degradation through the ubiquitin/proteasome pathway. The protein is UBX domain-containing protein 10 (ucp10) of Schizosaccharomyces pombe (strain 972 / ATCC 24843) (Fission yeast).